Consider the following 233-residue polypeptide: Segregation and condensation protein A (233 aa).

Belongs to the ScpA family. Component of a cohesin-like complex composed of ScpA, ScpB and the Smc homodimer, in which ScpA and ScpB bind to the head domain of Smc. The presence of the three proteins is required for the association of the complex with DNA.

It localises to the cytoplasm. Participates in chromosomal partition during cell division. May act via the formation of a condensin-like complex containing Smc and ScpB that pull DNA away from mid-cell into both cell halves. The protein is Segregation and condensation protein A of Streptococcus pyogenes serotype M1.